A 428-amino-acid polypeptide reads, in one-letter code: Dihydroorotase (428 aa).

2 residues coordinate Zn(2+): His59 and His61. Substrate contacts are provided by residues 61 to 63 (HLR) and Asn93. Positions 151, 178, and 231 each coordinate Zn(2+). Asn277 provides a ligand contact to substrate. Asp304 contacts Zn(2+). Asp304 is a catalytic residue. Substrate is bound by residues His308 and 322-323 (FG).

It belongs to the metallo-dependent hydrolases superfamily. DHOase family. Class I DHOase subfamily. Zn(2+) serves as cofactor.

It carries out the reaction (S)-dihydroorotate + H2O = N-carbamoyl-L-aspartate + H(+). It functions in the pathway pyrimidine metabolism; UMP biosynthesis via de novo pathway; (S)-dihydroorotate from bicarbonate: step 3/3. Functionally, catalyzes the reversible cyclization of carbamoyl aspartate to dihydroorotate. The protein is Dihydroorotase of Bacillus cereus (strain G9842).